The chain runs to 118 residues: Crustacean hyperglycemic hormones 2 (118 aa).

The first 22 residues, Met-1–Ala-22, serve as a signal peptide directing secretion. Intrachain disulfides connect Cys-51-Cys-87, Cys-67-Cys-83, and Cys-70-Cys-96. A Valine amide modification is found at Val-116.

This sequence belongs to the arthropod CHH/MIH/GIH/VIH hormone family.

The protein localises to the secreted. Hormone found in the sinus gland of isopods and decapods which controls the blood sugar level. Has a secretagogue action over the amylase released from the midgut gland. May act as a stress hormone and may be involved in the control of molting and reproduction. This chain is Crustacean hyperglycemic hormones 2 (CHH2), found in Penaeus monodon (Giant tiger prawn).